A 299-amino-acid polypeptide reads, in one-letter code: 4-diphosphocytidyl-2-C-methyl-D-erythritol kinase (299 aa).

The active site involves Lys18. Residue 104–114 (PIASGIGGGSS) coordinates ATP. Residue Asp146 is part of the active site.

Belongs to the GHMP kinase family. IspE subfamily.

It carries out the reaction 4-CDP-2-C-methyl-D-erythritol + ATP = 4-CDP-2-C-methyl-D-erythritol 2-phosphate + ADP + H(+). It functions in the pathway isoprenoid biosynthesis; isopentenyl diphosphate biosynthesis via DXP pathway; isopentenyl diphosphate from 1-deoxy-D-xylulose 5-phosphate: step 3/6. In terms of biological role, catalyzes the phosphorylation of the position 2 hydroxy group of 4-diphosphocytidyl-2C-methyl-D-erythritol. The sequence is that of 4-diphosphocytidyl-2-C-methyl-D-erythritol kinase from Brucella melitensis biotype 1 (strain ATCC 23456 / CCUG 17765 / NCTC 10094 / 16M).